The sequence spans 205 residues: Small ribosomal subunit protein uS4 (205 aa).

The interval 19-45 is disordered; it reads IWGRSKSPVNRREYGPGQHGQRRKGKL. The region spanning 94-157 is the S4 RNA-binding domain; the sequence is RRLDAVVYRA…KQMALVLEAV (64 aa).

The protein belongs to the universal ribosomal protein uS4 family. As to quaternary structure, part of the 30S ribosomal subunit. Contacts protein S5. The interaction surface between S4 and S5 is involved in control of translational fidelity.

One of the primary rRNA binding proteins, it binds directly to 16S rRNA where it nucleates assembly of the body of the 30S subunit. Its function is as follows. With S5 and S12 plays an important role in translational accuracy. This chain is Small ribosomal subunit protein uS4, found in Azorhizobium caulinodans (strain ATCC 43989 / DSM 5975 / JCM 20966 / LMG 6465 / NBRC 14845 / NCIMB 13405 / ORS 571).